The chain runs to 32 residues: Phallacidin proprotein (32 aa).

A propeptide spanning residues Met-1–Pro-10 is cleaved from the precursor. A cross-link (cyclopeptide (Ala-Pro)) is located at residues Ala-11–Pro-17. Positions Trp-12–Cys-16 form a cross-link, 2'-cysteinyl-6'-hydroxytryptophan sulfoxide (Trp-Cys). The propeptide occupies Cys-18–Lys-32.

It belongs to the MSDIN fungal toxin family. In terms of processing, processed by the macrocyclase-peptidase enzyme POPB to yield a toxic cyclic heptapeptide. POPB first removes 10 residues from the N-terminus. Conformational trapping of the remaining peptide forces the enzyme to release this intermediate rather than proceed to macrocyclization. The enzyme rebinds the remaining peptide in a different conformation and catalyzes macrocyclization of the N-terminal 7 residues.

Major toxin that belongs to the bicyclic heptapeptides called phallotoxins. Although structurally related to amatoxins, phallotoxins have a different mode of action, which is the stabilization of F-actin. Phallotoxins are poisonous when administered parenterally, but not orally because of poor absorption. This Amanita pallidorosea protein is Phallacidin proprotein.